A 332-amino-acid polypeptide reads, in one-letter code: Melanocortin receptor 4 (332 aa).

Over 1-43 the chain is Extracellular; it reads MNSTHHHGMYTSLHLWNRSSHGLHGNASESLGKGHSDGGCYEQ. N-linked (GlcNAc...) asparagine glycosylation is found at Asn2, Asn17, and Asn26. 2 disulfides stabilise this stretch: Cys40–Cys279 and Cys271–Cys277. A helical membrane pass occupies residues 44–69; that stretch reads LFVSPEVFVTLGVISLLENILVIVAI. Topologically, residues 70-81 are cytoplasmic; the sequence is AKNKNLHSPMYF. The helical transmembrane segment at 82 to 106 threads the bilayer; sequence FICSLAVADMLVSVSNGSETIVITL. Glu100, Asp122, and Asp126 together coordinate Ca(2+). Topologically, residues 107 to 123 are extracellular; the sequence is LNSTDTDAQSFTVNIDN. The chain crosses the membrane as a helical span at residues 124-145; sequence VIDSVICSSLLASICSLLSIAV. At 146–165 the chain is on the cytoplasmic side; the sequence is DRYFTIFYALQYHNIMTVRR. The helical transmembrane segment at 166 to 186 threads the bilayer; the sequence is VGIIISCIWAACTVSGVLFII. Over 187–191 the chain is Extracellular; sequence YSDSS. Residues 192-215 form a helical membrane-spanning segment; the sequence is AVIICLITMFFTMLVLMASLYVHM. Residues 216–248 are Cytoplasmic-facing; sequence FLMARLHIKRIAVLPGTGTIRQGANMKGAITLT. The chain crosses the membrane as a helical span at residues 249–271; it reads ILIGVFVVCWAPFFLHLLFYISC. At 272–280 the chain is on the extracellular side; it reads PQNPYCVCF. Residues 281-304 form a helical membrane-spanning segment; that stretch reads MSHFNLYLILIMCNAVIDPLIYAL. Topologically, residues 305–332 are cytoplasmic; it reads RSQELRKTFKEIICFYPLGGICELPGRY. Residue Cys318 is the site of S-palmitoyl cysteine attachment.

It belongs to the G-protein coupled receptor 1 family. In terms of assembly, homodimer; disulfide-linked, also forms higher order oligomers. Interacts with GNAS. Interacts with ATRNL1. Interacts with MGRN1; this interaction competes with GNAS-binding and thus inhibits agonist-induced cAMP production. Interacts with MRAP and MRAP2; these associated factors increase ligand-sensitivity and generation of cAMP. In terms of tissue distribution, brain, enriched in the striatum, nucleus accumbens, and periaqueductal gray.

The protein resides in the cell membrane. Functionally, hormone receptor that acts as a key component of the leptin-melanocortin pathway at the intersection of homeostatic maintenance of energetic state. Plays a role in regulating food intake: activation by a stimulating hormone such as anorexigenic alpha-melanocyte stimulating hormone (alpha-MSH) inhibits appetite, whereas binding to a natural antagonist like Agouti-related protein/AGRP promotes appetite. G-protein-coupled receptor that activates conventional Galphas signaling leading to induction of anorexogenic signaling in the hypothalamus to result in negative energy balance. Regulates the firing activity of neurons from the hypothalamus by alpha-MSH and AGRP independently of Galphas signaling by ligand-induced coupling of closure of inwardly rectifying potassium channel KCNJ13. In intestinal epithelial cells, plays a role in the inhibition of hepatic glucose production via nesfatin-1/NUCB2 leading to increased cyclic adenosine monophosphate (cAMP) levels and glucagon-like peptide 1 (GLP-1) secretion in the intestinal epithelium. The polypeptide is Melanocortin receptor 4 (Mc4r) (Rattus norvegicus (Rat)).